Here is a 305-residue protein sequence, read N- to C-terminus: tRNA dimethylallyltransferase (305 aa).

Position 8-15 (8-15 (GPTAVGKT)) interacts with ATP. 10–15 (TAVGKT) serves as a coordination point for substrate. The interval 33–36 (DSRQ) is interaction with substrate tRNA.

The protein belongs to the IPP transferase family. Monomer. Mg(2+) serves as cofactor.

The enzyme catalyses adenosine(37) in tRNA + dimethylallyl diphosphate = N(6)-dimethylallyladenosine(37) in tRNA + diphosphate. Its function is as follows. Catalyzes the transfer of a dimethylallyl group onto the adenine at position 37 in tRNAs that read codons beginning with uridine, leading to the formation of N6-(dimethylallyl)adenosine (i(6)A). The protein is tRNA dimethylallyltransferase of Thermotoga petrophila (strain ATCC BAA-488 / DSM 13995 / JCM 10881 / RKU-1).